The following is a 252-amino-acid chain: Protein PYRAB15930 (252 aa).

This sequence belongs to the CinA family.

In Pyrococcus abyssi (strain GE5 / Orsay), this protein is Protein PYRAB15930.